A 317-amino-acid chain; its full sequence is CXXC-type zinc finger protein 5 (317 aa).

Positions 1 to 10 (MSSLGGGSQD) are enriched in gly residues. The segment at 1 to 92 (MSSLGGGSQD…SFGSSGGGGS (92 aa)) is disordered. 2 stretches are compositionally biased toward low complexity: residues 11-27 (AGGS…SGSG) and 36-51 (STAV…VADD). The CXXC-type zinc-finger motif lies at 251-292 (GKKKRKRCGMCAPCRRRINCEQCSSCRNRKTGHQICKFRKCE). The Nuclear localization signal motif lies at 252–257 (KKKRKR). 8 residues coordinate Zn(2+): cysteine 258, cysteine 261, cysteine 264, cysteine 270, cysteine 273, cysteine 276, cysteine 286, and cysteine 291.

As to quaternary structure, interacts with DVL1. Interacts with RBPJ.

The protein resides in the nucleus. The protein localises to the cytoplasm. Its function is as follows. May indirectly participate in activation of the NF-kappa-B and MAPK pathways. Acts as a mediator of BMP4-mediated modulation of canonical Wnt signaling activity in neural stem cells. Required for DNA damage-induced ATM phosphorylation, p53 activation and cell cycle arrest. Involved in myelopoiesis. Binds to the oxygen responsive element of COX4I2 and represses its transcription under hypoxia conditions (4% oxygen), as well as normoxia conditions (20% oxygen). May repress COX4I2 transactivation induced by CHCHD2 and RBPJ. Binds preferentially to DNA containing cytidine-phosphate-guanosine (CpG) dinucleotides over CpH (H=A, T, and C), hemimethylated-CpG and hemimethylated-hydroxymethyl-CpG. This chain is CXXC-type zinc finger protein 5 (Cxxc5), found in Mus musculus (Mouse).